The chain runs to 188 residues: Ribosome-recycling factor (188 aa).

The protein belongs to the RRF family.

The protein resides in the cytoplasm. Functionally, responsible for the release of ribosomes from messenger RNA at the termination of protein biosynthesis. May increase the efficiency of translation by recycling ribosomes from one round of translation to another. In Anaeromyxobacter sp. (strain K), this protein is Ribosome-recycling factor.